A 202-amino-acid polypeptide reads, in one-letter code: MSRYRGPRLRITRRLGDLPGLTRKAAKRSHPPGQHGQARRKRSEYAIRLEEKQKLRFNYGISERQLVRYVKKARAQDGSTGTNLLKLLENRLDNVCFRLGFGPTVPGARQLVNHGHVTVNGRVLDIASYQCKAGDVVAIRERKGSKKLAEANLEFPGLANVPPHIELDKAKMSAKIISKCEREWVALEINELLVVEYYSRKV.

Positions 1-13 are enriched in basic residues; the sequence is MSRYRGPRLRITR. Residues 1–43 form a disordered region; that stretch reads MSRYRGPRLRITRRLGDLPGLTRKAAKRSHPPGQHGQARRKRS. The S4 RNA-binding domain occupies 90–152; sequence NRLDNVCFRL…KGSKKLAEAN (63 aa).

The protein belongs to the universal ribosomal protein uS4 family. In terms of assembly, part of the 30S ribosomal subunit. Contacts protein S5. The interaction surface between S4 and S5 is involved in control of translational fidelity.

One of the primary rRNA binding proteins, it binds directly to 16S rRNA where it nucleates assembly of the body of the 30S subunit. In terms of biological role, with S5 and S12 plays an important role in translational accuracy. In Prochlorococcus marinus (strain MIT 9303), this protein is Small ribosomal subunit protein uS4.